We begin with the raw amino-acid sequence, 334 residues long: 4-hydroxy-3-methylbut-2-enyl diphosphate reductase (334 aa).

Cys-19 provides a ligand contact to [4Fe-4S] cluster. Residues His-48 and His-84 each coordinate (2E)-4-hydroxy-3-methylbut-2-enyl diphosphate. The dimethylallyl diphosphate site is built by His-48 and His-84. 2 residues coordinate isopentenyl diphosphate: His-48 and His-84. Residue Cys-106 coordinates [4Fe-4S] cluster. His-134 contacts (2E)-4-hydroxy-3-methylbut-2-enyl diphosphate. Residue His-134 participates in dimethylallyl diphosphate binding. Residue His-134 participates in isopentenyl diphosphate binding. Residue Glu-136 is the Proton donor of the active site. Thr-175 is a binding site for (2E)-4-hydroxy-3-methylbut-2-enyl diphosphate. Cys-205 provides a ligand contact to [4Fe-4S] cluster. Residues Ser-233, Ser-234, Asn-235, and Ser-278 each contribute to the (2E)-4-hydroxy-3-methylbut-2-enyl diphosphate site. 4 residues coordinate dimethylallyl diphosphate: Ser-233, Ser-234, Asn-235, and Ser-278. Residues Ser-233, Ser-234, Asn-235, and Ser-278 each coordinate isopentenyl diphosphate.

This sequence belongs to the IspH family. [4Fe-4S] cluster serves as cofactor.

The catalysed reaction is isopentenyl diphosphate + 2 oxidized [2Fe-2S]-[ferredoxin] + H2O = (2E)-4-hydroxy-3-methylbut-2-enyl diphosphate + 2 reduced [2Fe-2S]-[ferredoxin] + 2 H(+). It carries out the reaction dimethylallyl diphosphate + 2 oxidized [2Fe-2S]-[ferredoxin] + H2O = (2E)-4-hydroxy-3-methylbut-2-enyl diphosphate + 2 reduced [2Fe-2S]-[ferredoxin] + 2 H(+). Its pathway is isoprenoid biosynthesis; dimethylallyl diphosphate biosynthesis; dimethylallyl diphosphate from (2E)-4-hydroxy-3-methylbutenyl diphosphate: step 1/1. It participates in isoprenoid biosynthesis; isopentenyl diphosphate biosynthesis via DXP pathway; isopentenyl diphosphate from 1-deoxy-D-xylulose 5-phosphate: step 6/6. In terms of biological role, catalyzes the conversion of 1-hydroxy-2-methyl-2-(E)-butenyl 4-diphosphate (HMBPP) into a mixture of isopentenyl diphosphate (IPP) and dimethylallyl diphosphate (DMAPP). Acts in the terminal step of the DOXP/MEP pathway for isoprenoid precursor biosynthesis. The polypeptide is 4-hydroxy-3-methylbut-2-enyl diphosphate reductase (Chelativorans sp. (strain BNC1)).